Reading from the N-terminus, the 419-residue chain is Probable glycosidase C21B10.07 (419 aa).

2 disordered regions span residues 1-20 and 29-67; these read MGIPDSTTDSRHSLSSAALS and DPARKNESTNDVIDNHTDTEIDDHDNDHENLDSNNNNEN. Over residues 30–59 the composition is skewed to basic and acidic residues; that stretch reads PARKNESTNDVIDNHTDTEIDDHDNDHENL. Residues 88-108 traverse the membrane as a helical segment; sequence FIWILIFIVALICSVLIGVLG. One can recognise a GH16 domain in the interval 122-387; sequence PSYKAKTYSL…WAGSSVYSSA (266 aa). Glutamate 237 functions as the Nucleophile in the catalytic mechanism. The active-site Proton donor is the glutamate 242.

This sequence belongs to the glycosyl hydrolase 16 family.

It is found in the membrane. In Schizosaccharomyces pombe (strain 972 / ATCC 24843) (Fission yeast), this protein is Probable glycosidase C21B10.07.